We begin with the raw amino-acid sequence, 596 residues long: Elongation factor 4 (596 aa).

A tr-type G domain is found at 2–184; the sequence is KQIRNFSIIA…VIVAKIPPPE (183 aa). GTP contacts are provided by residues 14–19 and 131–134; these read DHGKST and NKID.

This sequence belongs to the TRAFAC class translation factor GTPase superfamily. Classic translation factor GTPase family. LepA subfamily.

It is found in the cell inner membrane. It catalyses the reaction GTP + H2O = GDP + phosphate + H(+). Required for accurate and efficient protein synthesis under certain stress conditions. May act as a fidelity factor of the translation reaction, by catalyzing a one-codon backward translocation of tRNAs on improperly translocated ribosomes. Back-translocation proceeds from a post-translocation (POST) complex to a pre-translocation (PRE) complex, thus giving elongation factor G a second chance to translocate the tRNAs correctly. Binds to ribosomes in a GTP-dependent manner. The polypeptide is Elongation factor 4 (Shewanella baltica (strain OS223)).